A 94-amino-acid chain; its full sequence is Large ribosomal subunit protein uL23 (94 aa).

The protein belongs to the universal ribosomal protein uL23 family. Part of the 50S ribosomal subunit. Contacts protein L29, and trigger factor when it is bound to the ribosome.

Functionally, one of the early assembly proteins it binds 23S rRNA. One of the proteins that surrounds the polypeptide exit tunnel on the outside of the ribosome. Forms the main docking site for trigger factor binding to the ribosome. The protein is Large ribosomal subunit protein uL23 of Geobacter metallireducens (strain ATCC 53774 / DSM 7210 / GS-15).